A 185-amino-acid polypeptide reads, in one-letter code: Ribosome-recycling factor (185 aa).

It belongs to the RRF family.

The protein localises to the cytoplasm. Responsible for the release of ribosomes from messenger RNA at the termination of protein biosynthesis. May increase the efficiency of translation by recycling ribosomes from one round of translation to another. The sequence is that of Ribosome-recycling factor from Corynebacterium kroppenstedtii (strain DSM 44385 / JCM 11950 / CIP 105744 / CCUG 35717).